Consider the following 523-residue polypeptide: Asc-type amino acid transporter 1 (523 aa).

The disordered stretch occupies residues 1–28; that stretch reads MAGHTQQPSGRGNPRPAPSPSPVPGTVP. Residues 15–25 show a composition bias toward pro residues; it reads RPAPSPSPVPG. 9 helical membrane-spanning segments follow: residues 40–60, 72–92, 113–133, 268–288, 310–330, 362–382, 388–408, 424–444, and 448–468; these read IGLL…GIFI, VGLA…GSLC, IFGG…MYPT, AIFI…IAYF, LLGY…FGGI, CTPI…MLVG, INYV…GLLL, LLIP…SFIS, and VCGV…LGVF. The segment at 499–523 is disordered; the sequence is APEEEENGPCPPSLLPATDKPSKPQ.

It belongs to the amino acid-polyamine-organocation (APC) superfamily. Disulfide-linked heterodimer with the amino acid transport protein SLC3A2/4F2hc. Expressed in brain, heart, kidney, liver, lung, pancreas, placenta, and skeletal muscle.

It localises to the cell membrane. The catalysed reaction is L-alanine(in) + glycine(out) = L-alanine(out) + glycine(in). It catalyses the reaction L-serine(out) + L-alanine(in) = L-serine(in) + L-alanine(out). The enzyme catalyses L-threonine(out) + L-alanine(in) = L-threonine(in) + L-alanine(out). It carries out the reaction L-cysteine(out) + L-alanine(in) = L-cysteine(in) + L-alanine(out). The catalysed reaction is 2-aminoisobutanoate(out) + L-alanine(in) = 2-aminoisobutanoate(in) + L-alanine(out). It catalyses the reaction D-serine(out) + L-alanine(in) = D-serine(in) + L-alanine(out). The enzyme catalyses D-alanine(out) + L-alanine(in) = D-alanine(in) + L-alanine(out). It carries out the reaction L-valine(out) + L-alanine(in) = L-valine(in) + L-alanine(out). The catalysed reaction is L-methionine(out) + L-alanine(in) = L-methionine(in) + L-alanine(out). It catalyses the reaction beta-alanine(out) + L-alanine(in) = beta-alanine(in) + L-alanine(out). The enzyme catalyses D-cysteine(out) + L-alanine(in) = D-cysteine(in) + L-alanine(out). It carries out the reaction D-threonine(out) + L-alanine(in) = D-threonine(in) + L-alanine(out). The catalysed reaction is D-isoleucine(out) + D-serine(in) = D-isoleucine(in) + D-serine(out). It catalyses the reaction D-serine(in) = D-serine(out). In terms of biological role, associates with SLC3A2/4F2hc to form a functional heterodimeric complex that translocates small neutral L- and D-amino acids across the plasma membrane. Preferentially mediates exchange transport, but can also operate via facilitated diffusion. Acts as a major transporter for glycine, L- and D-serine in the central nervous system. At the spinal cord and brainstem regulates glycine metabolism and glycinergic inhibitory neurotransmission by providing for glycine de novo synthesis from L-serine and glycine recycling from astrocytes to glycinergic motor neurons. At Schaffer collateral-CA1 synapses mediates D-serine and glycine release that modulates post-synaptic activation of NMDA receptors and excitatory glutamatergic transmission. May regulate D-serine release from mesenchymal progenitors located in developing subcutaneous adipose tissue, favoring white adipocyte over thermogenic beige adipocyte lineage commitment. In Homo sapiens (Human), this protein is Asc-type amino acid transporter 1 (SLC7A10).